Consider the following 300-residue polypeptide: Recombination-promoting nuclease RpnC (300 aa).

It belongs to the Rpn/YhgA-like nuclease family.

Functionally, a low activity DNA endonuclease yielding 3'-hydroxyl ends. Upon expression enhances RecA-independent DNA recombination 2.9-fold, concomitantly reducing viability by 59% and inducing DNA damage as measured by induction of the SOS repair response. This is Recombination-promoting nuclease RpnC from Escherichia coli (strain K12).